Here is a 410-residue protein sequence, read N- to C-terminus: Multifunctional CCA protein (410 aa).

ATP is bound by residues Gly8 and Arg11. Gly8 and Arg11 together coordinate CTP. Glu21 and Asp23 together coordinate Mg(2+). ATP-binding residues include Arg91, Arg137, and Arg140. CTP is bound by residues Arg91, Arg137, and Arg140. Residues 228–329 (TLLHQFLCLK…WKLFKSLDIL (102 aa)) enclose the HD domain.

It belongs to the tRNA nucleotidyltransferase/poly(A) polymerase family. Bacterial CCA-adding enzyme type 1 subfamily. As to quaternary structure, monomer. Can also form homodimers and oligomers. It depends on Mg(2+) as a cofactor. Requires Ni(2+) as cofactor.

The enzyme catalyses a tRNA precursor + 2 CTP + ATP = a tRNA with a 3' CCA end + 3 diphosphate. It catalyses the reaction a tRNA with a 3' CCA end + 2 CTP + ATP = a tRNA with a 3' CCACCA end + 3 diphosphate. Its function is as follows. Catalyzes the addition and repair of the essential 3'-terminal CCA sequence in tRNAs without using a nucleic acid template. Adds these three nucleotides in the order of C, C, and A to the tRNA nucleotide-73, using CTP and ATP as substrates and producing inorganic pyrophosphate. tRNA 3'-terminal CCA addition is required both for tRNA processing and repair. Also involved in tRNA surveillance by mediating tandem CCA addition to generate a CCACCA at the 3' terminus of unstable tRNAs. While stable tRNAs receive only 3'-terminal CCA, unstable tRNAs are marked with CCACCA and rapidly degraded. This is Multifunctional CCA protein from Alcanivorax borkumensis (strain ATCC 700651 / DSM 11573 / NCIMB 13689 / SK2).